A 422-amino-acid chain; its full sequence is UPF0229 protein SO_2883 (422 aa).

The disordered stretch occupies residues 60–111 (SEPMFHQGKGGVRDRVHPGNDQFTRGDKIDRPQGGSGGGAGKGDASDSGEGN). The span at 70–90 (GVRDRVHPGNDQFTRGDKIDR) shows a compositional bias: basic and acidic residues.

The protein belongs to the UPF0229 family.

The sequence is that of UPF0229 protein SO_2883 from Shewanella oneidensis (strain ATCC 700550 / JCM 31522 / CIP 106686 / LMG 19005 / NCIMB 14063 / MR-1).